Reading from the N-terminus, the 217-residue chain is NADH dehydrogenase (ubiquinone) 23 kDa subunit (217 aa).

The transit peptide at 1-26 (MSLTMRIFTASRNGQRLFGSHGARLL) directs the protein to the mitochondrion. 2 consecutive 4Fe-4S ferredoxin-type domains span residues 109 to 138 (RRYP…IEAE) and 148 to 177 (TRYD…EGPN). 8 residues coordinate [4Fe-4S] cluster: cysteine 118, cysteine 121, cysteine 124, cysteine 128, cysteine 157, cysteine 160, cysteine 163, and cysteine 167.

This sequence belongs to the complex I 23 kDa subunit family. In terms of assembly, part of the mitochondrial membrane respiratory chain NADH dehydrogenase (Complex I). This is a component of the iron-sulfur (IP) fragment of the enzyme. Requires [4Fe-4S] cluster as cofactor. In terms of tissue distribution, expressed in muscles (at protein level).

The protein resides in the mitochondrion. The enzyme catalyses a ubiquinone + NADH + 5 H(+)(in) = a ubiquinol + NAD(+) + 4 H(+)(out). Core subunit of the mitochondrial membrane respiratory chain NADH dehydrogenase (Complex I) that is believed to belong to the minimal assembly required for catalysis. Complex I functions in the transfer of electrons from NADH to the respiratory chain. The immediate electron acceptor for the enzyme is believed to be ubiquinone. The polypeptide is NADH dehydrogenase (ubiquinone) 23 kDa subunit (Drosophila melanogaster (Fruit fly)).